A 374-amino-acid polypeptide reads, in one-letter code: F-box/LRR-repeat protein 8 (374 aa).

Positions 2 to 48 (GELVDNLPEEVLALIFRDLPLRDLAVATRVCRAWAAAAANSTVWSDK) constitute an F-box domain.

As to quaternary structure, directly interacts with SKP1 and CUL1. Widely expressed during embryogenesis and in adult tissues.

Substrate-recognition component of the SCF (SKP1-CUL1-F-box protein)-type E3 ubiquitin ligase complex. In Mus musculus (Mouse), this protein is F-box/LRR-repeat protein 8 (Fbxl8).